The following is a 374-amino-acid chain: MALSWNIRIRRRSWFRFILPIIVLGLLCYGTWAYCHKLCYEQVDKRLRQKSVSVGLICAVCFLDVVVIFIWLQIVILVGPGTQPHVAPFLILPIASEEKTSNTSQNTSVEYDAVVPPKCYQSDPHGYPIWCSECQSLKMERTHHSSELGHCIPRFDHYCMWIGTVIGRDNYRLFVQFAAYFSTLLLIMWVSICVYIRIITQHNHNYSPNLNANIISTLVFAILGWLLTASLLASSIFYMSQNKTSLEAIIDSKRKKFGTRKIFCYYSEANKLRFVVEFDRSEFHSFWDKKSILANIKDFMGSNILMWIIPLGKPYTSRCKSDGKSGSKTTLVEILGPYEETLSDYTIQAIEDKISRGEYLATLRASGDDSDPAY.

Residues 1–13 are Cytoplasmic-facing; that stretch reads MALSWNIRIRRRS. A helical membrane pass occupies residues 14–34; sequence WFRFILPIIVLGLLCYGTWAY. Residues 35–55 lie on the Lumenal side of the membrane; that stretch reads CHKLCYEQVDKRLRQKSVSVG. The chain crosses the membrane as a helical span at residues 56-76; it reads LICAVCFLDVVVIFIWLQIVI. Residues 77-173 lie on the Cytoplasmic side of the membrane; the sequence is LVGPGTQPHV…TVIGRDNYRL (97 aa). Residues 129-179 form the DHHC domain; the sequence is IWCSECQSLKMERTHHSSELGHCIPRFDHYCMWIGTVIGRDNYRLFVQFAA. The helical transmembrane segment at 174 to 194 threads the bilayer; sequence FVQFAAYFSTLLLIMWVSICV. Topologically, residues 195-217 are lumenal; the sequence is YIRIITQHNHNYSPNLNANIIST. The chain crosses the membrane as a helical span at residues 218 to 238; that stretch reads LVFAILGWLLTASLLASSIFY. Topologically, residues 239–374 are cytoplasmic; that stretch reads MSQNKTSLEA…ASGDDSDPAY (136 aa).

Belongs to the DHHC palmitoyltransferase family. PFA5 subfamily. Autopalmitoylated.

It is found in the membrane. It catalyses the reaction L-cysteinyl-[protein] + hexadecanoyl-CoA = S-hexadecanoyl-L-cysteinyl-[protein] + CoA. The chain is Palmitoyltransferase PFA5 (PFA5) from Saccharomyces cerevisiae (strain ATCC 204508 / S288c) (Baker's yeast).